We begin with the raw amino-acid sequence, 343 residues long: Sulfate/thiosulfate import ATP-binding protein CysA (343 aa).

One can recognise an ABC transporter domain in the interval 3-233; that stretch reads ILIENISKTF…PATPFVMGFM (231 aa). 35–42 serves as a coordination point for ATP; sequence GPSGSGKS.

The protein belongs to the ABC transporter superfamily. Sulfate/tungstate importer (TC 3.A.1.6) family.

It is found in the plastid. Its subcellular location is the chloroplast. It carries out the reaction sulfate(out) + ATP + H2O = sulfate(in) + ADP + phosphate + H(+). The enzyme catalyses thiosulfate(out) + ATP + H2O = thiosulfate(in) + ADP + phosphate + H(+). Functionally, part of the ABC transporter complex involved in sulfate/thiosulfate import. Responsible for energy coupling to the transport system. The protein is Sulfate/thiosulfate import ATP-binding protein CysA of Nephroselmis olivacea (Green alga).